Reading from the N-terminus, the 29-residue chain is Cyclotide cter-K (29 aa).

The cyclopeptide (His-Asn) cross-link spans H1 to N29. Intrachain disulfides connect C4-C20, C8-C22, and C13-C27.

Post-translationally, contains 3 disulfide bonds. In terms of processing, this is a cyclic peptide.

Functionally, probably participates in a plant defense mechanism. The protein is Cyclotide cter-K of Clitoria ternatea (Butterfly pea).